The following is a 92-amino-acid chain: CRISPR-associated endoribonuclease Cas2 2 (92 aa).

Residue Asp12 coordinates Mg(2+).

It belongs to the CRISPR-associated endoribonuclease Cas2 protein family. In terms of assembly, homodimer, forms a heterotetramer with a Cas1 homodimer. It depends on Mg(2+) as a cofactor.

CRISPR (clustered regularly interspaced short palindromic repeat), is an adaptive immune system that provides protection against mobile genetic elements (viruses, transposable elements and conjugative plasmids). CRISPR clusters contain sequences complementary to antecedent mobile elements and target invading nucleic acids. CRISPR clusters are transcribed and processed into CRISPR RNA (crRNA). Functions as a ssRNA-specific endoribonuclease. Involved in the integration of spacer DNA into the CRISPR cassette. The chain is CRISPR-associated endoribonuclease Cas2 2 (cas22) from Archaeoglobus fulgidus (strain ATCC 49558 / DSM 4304 / JCM 9628 / NBRC 100126 / VC-16).